A 267-amino-acid chain; its full sequence is MVSVSTCFSALRDRAQCALIPFITAGDPSLEITAKALQVLDQQGADLIELGVPYSDPLADGPTIQAAATRALQKGTRLDAVLEMISHVAPNLRSPLILFTYYNPIFHRGVEPFLQQVAQAGVQGLVVPDLPLEEADTVLTQAAAVGIELTLLVAPTTPRSRIAAIAERSQGFIYLVSTTGVTGMRSKVEGRVHELLLELQQVTDKPIGVGFGISQPEHARQVMEWGADAAIVGSAFVKRLAEGTPEQGLAAIADFCRSLKTALTPVD.

Catalysis depends on proton acceptor residues Glu-49 and Asp-60.

It belongs to the TrpA family. In terms of assembly, tetramer of two alpha and two beta chains.

The catalysed reaction is (1S,2R)-1-C-(indol-3-yl)glycerol 3-phosphate + L-serine = D-glyceraldehyde 3-phosphate + L-tryptophan + H2O. Its pathway is amino-acid biosynthesis; L-tryptophan biosynthesis; L-tryptophan from chorismate: step 5/5. Its function is as follows. The alpha subunit is responsible for the aldol cleavage of indoleglycerol phosphate to indole and glyceraldehyde 3-phosphate. The chain is Tryptophan synthase alpha chain from Cyanothece sp. (strain PCC 7425 / ATCC 29141).